We begin with the raw amino-acid sequence, 166 residues long: MPDATLPACFLGLLALTSACYFQNCPKGGKRAMSDLELRQCLPCGPGGKGRCFGPSICCGDELGCFVGTAEALRCQEENYLPSPCQSGQKPCGSGGRCAAAGICCNDESCVTEPECREGASFLRRARASDRSNATLLDGPSGALLLRLVQLAGAPEPAEPAQPGVY.

The signal sequence occupies residues 1 to 19 (MPDATLPACFLGLLALTSA). Cys20 and Cys25 are disulfide-bonded. The residue at position 28 (Gly28) is a Glycine amide. 7 cysteine pairs are disulfide-bonded: Cys41/Cys85, Cys44/Cys58, Cys52/Cys75, Cys59/Cys65, Cys92/Cys104, Cys98/Cys116, and Cys105/Cys110. N-linked (GlcNAc...) asparagine glycosylation is present at Asn133.

It belongs to the vasopressin/oxytocin family. As to quaternary structure, interacts with vasopressin receptors V1bR/AVPR1B (Ki=85 pM), V1aR/AVPR1A (Ki=0.6 nM) and V2R/AVPR2 (Ki=4.9 nM). Interacts with oxytocin receptor (OXTR) (Ki=110 nM). Post-translationally, a shorter neurophysin molecule (32-123) is called neurophysin-I and is derived from the complete protein (called neurophysin III) by proteolytic degradation (in vivo or after extraction).

It is found in the secreted. Its function is as follows. Neurophysin 2 specifically binds vasopressin. In terms of biological role, vasopressin has a direct antidiuretic action on the kidney, it also causes vasoconstriction of the peripheral vessels. Acts by binding to vasopressin receptors (V1bR/AVPR1B, V1aR/AVPR1A, and V2R/AVPR2). In Sus scrofa (Pig), this protein is Vasopressin-neurophysin 2-copeptin (AVP).